A 565-amino-acid chain; its full sequence is Dihydroxy-acid dehydratase (565 aa).

D80 contacts Mg(2+). Residue C121 participates in [2Fe-2S] cluster binding. Mg(2+) contacts are provided by D122 and K123. Residue K123 is modified to N6-carboxylysine. A [2Fe-2S] cluster-binding site is contributed by C194. E447 contacts Mg(2+). S473 acts as the Proton acceptor in catalysis.

This sequence belongs to the IlvD/Edd family. As to quaternary structure, homodimer. It depends on [2Fe-2S] cluster as a cofactor. Mg(2+) serves as cofactor.

It carries out the reaction (2R)-2,3-dihydroxy-3-methylbutanoate = 3-methyl-2-oxobutanoate + H2O. It catalyses the reaction (2R,3R)-2,3-dihydroxy-3-methylpentanoate = (S)-3-methyl-2-oxopentanoate + H2O. It participates in amino-acid biosynthesis; L-isoleucine biosynthesis; L-isoleucine from 2-oxobutanoate: step 3/4. Its pathway is amino-acid biosynthesis; L-valine biosynthesis; L-valine from pyruvate: step 3/4. Functions in the biosynthesis of branched-chain amino acids. Catalyzes the dehydration of (2R,3R)-2,3-dihydroxy-3-methylpentanoate (2,3-dihydroxy-3-methylvalerate) into 2-oxo-3-methylpentanoate (2-oxo-3-methylvalerate) and of (2R)-2,3-dihydroxy-3-methylbutanoate (2,3-dihydroxyisovalerate) into 2-oxo-3-methylbutanoate (2-oxoisovalerate), the penultimate precursor to L-isoleucine and L-valine, respectively. This is Dihydroxy-acid dehydratase from Chlorobium phaeovibrioides (strain DSM 265 / 1930) (Prosthecochloris vibrioformis (strain DSM 265)).